We begin with the raw amino-acid sequence, 260 residues long: DNA repair protein RecO (260 aa).

It belongs to the RecO family.

Functionally, involved in DNA repair and RecF pathway recombination. The protein is DNA repair protein RecO of Streptococcus suis (strain 98HAH33).